Reading from the N-terminus, the 281-residue chain is Ribosomal RNA small subunit methyltransferase A (281 aa).

The S-adenosyl-L-methionine site is built by asparagine 35, leucine 37, glycine 62, glutamate 83, aspartate 107, and asparagine 125.

This sequence belongs to the class I-like SAM-binding methyltransferase superfamily. rRNA adenine N(6)-methyltransferase family. RsmA subfamily.

Its subcellular location is the cytoplasm. It carries out the reaction adenosine(1518)/adenosine(1519) in 16S rRNA + 4 S-adenosyl-L-methionine = N(6)-dimethyladenosine(1518)/N(6)-dimethyladenosine(1519) in 16S rRNA + 4 S-adenosyl-L-homocysteine + 4 H(+). Functionally, specifically dimethylates two adjacent adenosines (A1518 and A1519) in the loop of a conserved hairpin near the 3'-end of 16S rRNA in the 30S particle. May play a critical role in biogenesis of 30S subunits. This chain is Ribosomal RNA small subunit methyltransferase A, found in Deinococcus geothermalis (strain DSM 11300 / CIP 105573 / AG-3a).